The primary structure comprises 159 residues: Ribosomal RNA large subunit methyltransferase H (159 aa).

Residues Gly108 and 127 to 132 (FGPMTF) each bind S-adenosyl-L-methionine.

It belongs to the RNA methyltransferase RlmH family. As to quaternary structure, homodimer.

It localises to the cytoplasm. The catalysed reaction is pseudouridine(1915) in 23S rRNA + S-adenosyl-L-methionine = N(3)-methylpseudouridine(1915) in 23S rRNA + S-adenosyl-L-homocysteine + H(+). Functionally, specifically methylates the pseudouridine at position 1915 (m3Psi1915) in 23S rRNA. The protein is Ribosomal RNA large subunit methyltransferase H of Magnetococcus marinus (strain ATCC BAA-1437 / JCM 17883 / MC-1).